Reading from the N-terminus, the 237-residue chain is Ribosomal RNA large subunit methyltransferase E (237 aa).

5 residues coordinate S-adenosyl-L-methionine: Gly-80, Trp-82, Asp-108, Asp-124, and Asp-148. Lys-188 (proton acceptor) is an active-site residue.

The protein belongs to the class I-like SAM-binding methyltransferase superfamily. RNA methyltransferase RlmE family.

Its subcellular location is the cytoplasm. It carries out the reaction uridine(2552) in 23S rRNA + S-adenosyl-L-methionine = 2'-O-methyluridine(2552) in 23S rRNA + S-adenosyl-L-homocysteine + H(+). Functionally, specifically methylates the uridine in position 2552 of 23S rRNA at the 2'-O position of the ribose in the fully assembled 50S ribosomal subunit. The polypeptide is Ribosomal RNA large subunit methyltransferase E (Jannaschia sp. (strain CCS1)).